Here is a 255-residue protein sequence, read N- to C-terminus: tRNA (adenine(58)-N(1))-methyltransferase TrmI (255 aa).

Residues 104–107 (SGGL), Glu125, His130, Glu155, and Asp170 contribute to the S-adenosyl-L-methionine site.

The protein belongs to the class I-like SAM-binding methyltransferase superfamily. TRM61 family. In terms of assembly, homotetramer composed of a dimer of dimers.

The catalysed reaction is adenosine(58) in tRNA + S-adenosyl-L-methionine = N(1)-methyladenosine(58) in tRNA + S-adenosyl-L-homocysteine + H(+). In terms of biological role, catalyzes the S-adenosyl-L-methionine-dependent formation of N(1)-methyladenine at position 58 (m1A58) in tRNA. In Thermus thermophilus (strain ATCC 27634 / DSM 579 / HB8), this protein is tRNA (adenine(58)-N(1))-methyltransferase TrmI (trmI).